Consider the following 186-residue polypeptide: Ribosomal RNA small subunit methyltransferase G (186 aa).

S-adenosyl-L-methionine contacts are provided by residues Gly59, Phe64, Ile110–Glu111, and Arg124.

It belongs to the methyltransferase superfamily. RNA methyltransferase RsmG family.

It is found in the cytoplasm. It carries out the reaction guanosine(527) in 16S rRNA + S-adenosyl-L-methionine = N(7)-methylguanosine(527) in 16S rRNA + S-adenosyl-L-homocysteine. In terms of biological role, specifically methylates the N7 position of guanine in position 527 of 16S rRNA. The sequence is that of Ribosomal RNA small subunit methyltransferase G from Campylobacter curvus (strain 525.92).